Here is a 145-residue protein sequence, read N- to C-terminus: MKKITLIGSELAKTGNEFIYLGPLEECEPCRFKRICHNNLDVGTRYKIVSVRSANHPCTVHENGVKVVEVMPAEFTIIIESKKALEGVTLTHSDVHCDRVCCENYLSCHPEGISGKYRVSSILPEKVECKKGNSLKKISIIPVQQ.

The protein belongs to the UPF0179 family.

The chain is UPF0179 protein MmarC6_0993 from Methanococcus maripaludis (strain C6 / ATCC BAA-1332).